A 471-amino-acid polypeptide reads, in one-letter code: Siroheme synthase (471 aa).

Positions Met1–Leu203 are precorrin-2 dehydrogenase /sirohydrochlorin ferrochelatase. NAD(+) contacts are provided by residues Glu22–Val23 and Arg43–Ala44. Ser128 is subject to Phosphoserine. The uroporphyrinogen-III C-methyltransferase stretch occupies residues Gly215 to Ala471. Pro224 contributes to the S-adenosyl-L-methionine binding site. Asp247 functions as the Proton acceptor in the catalytic mechanism. Lys269 acts as the Proton donor in catalysis. Residues Gly300–Asp302, Ile305, Thr330–Ala331, Met382, and Gly411 contribute to the S-adenosyl-L-methionine site.

In the N-terminal section; belongs to the precorrin-2 dehydrogenase / sirohydrochlorin ferrochelatase family. This sequence in the C-terminal section; belongs to the precorrin methyltransferase family.

It catalyses the reaction uroporphyrinogen III + 2 S-adenosyl-L-methionine = precorrin-2 + 2 S-adenosyl-L-homocysteine + H(+). The catalysed reaction is precorrin-2 + NAD(+) = sirohydrochlorin + NADH + 2 H(+). It carries out the reaction siroheme + 2 H(+) = sirohydrochlorin + Fe(2+). It functions in the pathway cofactor biosynthesis; adenosylcobalamin biosynthesis; precorrin-2 from uroporphyrinogen III: step 1/1. Its pathway is cofactor biosynthesis; adenosylcobalamin biosynthesis; sirohydrochlorin from precorrin-2: step 1/1. The protein operates within porphyrin-containing compound metabolism; siroheme biosynthesis; precorrin-2 from uroporphyrinogen III: step 1/1. It participates in porphyrin-containing compound metabolism; siroheme biosynthesis; siroheme from sirohydrochlorin: step 1/1. It functions in the pathway porphyrin-containing compound metabolism; siroheme biosynthesis; sirohydrochlorin from precorrin-2: step 1/1. In terms of biological role, multifunctional enzyme that catalyzes the SAM-dependent methylations of uroporphyrinogen III at position C-2 and C-7 to form precorrin-2 via precorrin-1. Then it catalyzes the NAD-dependent ring dehydrogenation of precorrin-2 to yield sirohydrochlorin. Finally, it catalyzes the ferrochelation of sirohydrochlorin to yield siroheme. The chain is Siroheme synthase from Sodalis glossinidius (strain morsitans).